The chain runs to 454 residues: Bifunctional protein GlmU (454 aa).

The tract at residues 1–228 (MNKCAIILAA…FEETLGVNSR (228 aa)) is pyrophosphorylase. Residues 8–11 (LAAG), Lys-22, Gln-73, and 78–79 (GT) each bind UDP-N-acetyl-alpha-D-glucosamine. Asp-103 contributes to the Mg(2+) binding site. 4 residues coordinate UDP-N-acetyl-alpha-D-glucosamine: Gly-140, Glu-154, Asn-169, and Asn-226. Asn-226 is a Mg(2+) binding site. A linker region spans residues 229 to 249 (AELAKVESIMRNRINRTHLDN). The tract at residues 250–454 (GVTIIDPLNT…EGWVERKKLK (205 aa)) is N-acetyltransferase. 2 residues coordinate UDP-N-acetyl-alpha-D-glucosamine: Arg-331 and Lys-349. Catalysis depends on His-361, which acts as the Proton acceptor. Positions 364 and 375 each coordinate UDP-N-acetyl-alpha-D-glucosamine. Residues 384 to 385 (NY), Ala-421, and Arg-438 each bind acetyl-CoA.

The protein in the N-terminal section; belongs to the N-acetylglucosamine-1-phosphate uridyltransferase family. It in the C-terminal section; belongs to the transferase hexapeptide repeat family. As to quaternary structure, homotrimer. The cofactor is Mg(2+).

The protein resides in the cytoplasm. It carries out the reaction alpha-D-glucosamine 1-phosphate + acetyl-CoA = N-acetyl-alpha-D-glucosamine 1-phosphate + CoA + H(+). It catalyses the reaction N-acetyl-alpha-D-glucosamine 1-phosphate + UTP + H(+) = UDP-N-acetyl-alpha-D-glucosamine + diphosphate. Its pathway is nucleotide-sugar biosynthesis; UDP-N-acetyl-alpha-D-glucosamine biosynthesis; N-acetyl-alpha-D-glucosamine 1-phosphate from alpha-D-glucosamine 6-phosphate (route II): step 2/2. It functions in the pathway nucleotide-sugar biosynthesis; UDP-N-acetyl-alpha-D-glucosamine biosynthesis; UDP-N-acetyl-alpha-D-glucosamine from N-acetyl-alpha-D-glucosamine 1-phosphate: step 1/1. It participates in bacterial outer membrane biogenesis; LPS lipid A biosynthesis. Its function is as follows. Catalyzes the last two sequential reactions in the de novo biosynthetic pathway for UDP-N-acetylglucosamine (UDP-GlcNAc). The C-terminal domain catalyzes the transfer of acetyl group from acetyl coenzyme A to glucosamine-1-phosphate (GlcN-1-P) to produce N-acetylglucosamine-1-phosphate (GlcNAc-1-P), which is converted into UDP-GlcNAc by the transfer of uridine 5-monophosphate (from uridine 5-triphosphate), a reaction catalyzed by the N-terminal domain. This chain is Bifunctional protein GlmU, found in Clostridium perfringens (strain ATCC 13124 / DSM 756 / JCM 1290 / NCIMB 6125 / NCTC 8237 / Type A).